The chain runs to 1018 residues: Thrombospondin type-1 domain-containing protein 4 (1018 aa).

Positions 1–26 (MVSYLTSCLSALSTLLLLLGSQLVCP) are cleaved as a signal peptide. 3 disordered regions span residues 34–56 (KVPQ…SPGV), 116–240 (HRSQ…PSEA), and 534–623 (SPQV…NWKQ). The 254-residue stretch at 54–307 (PGVWGSWGPW…YKLCNTNACP (254 aa)) folds into the TSP type-1 1 domain. Residues 187 to 199 (QRLRRQRPSSRHS) are compositionally biased toward basic residues. The span at 216–230 (HQFSHSQPLYQSDSG) shows a compositional bias: polar residues. Basic and acidic residues-rich tracts occupy residues 558-573 (QEDR…KEDS) and 592-603 (RHPERFPSHRPD). 5 consecutive TSP type-1 domains span residues 676 to 737 (CPAF…KICS), 739 to 792 (WQIR…DMGP), 793 to 851 (CAKS…GPCT), 852 to 911 (GKVE…HLKP), and 912 to 968 (CGAK…QDCV). Residues 971-1008 (VDENCKDKYYNCNVVVQARLCVYNYYKTACCASCTRVA) form the PLAC domain.

Isoform 2 interacts with FBN1. Isoform 2 may interact with TGFB1. Both isoforms are expressed in the embryo from 7 dpc through 17. Isoform 1 is widely expressed in adult tissues. Isoform 2 is detected in brain, spinal cord, eye, kidney, stomach and uterus. Mainly observed in fibrillar extracellular matrices in elastic tissues (at protein level).

It is found in the secreted. It localises to the extracellular space. The protein resides in the extracellular matrix. Its function is as follows. Promotes FBN1 matrix assembly. Attenuates TGFB signaling, possibly by accelerating the sequestration of large latent complexes of TGFB or active TGFB by FBN1 microfibril assembly, thereby negatively regulating the expression of TGFB regulatory targets, such as POSTN. The protein is Thrombospondin type-1 domain-containing protein 4 (Thsd4) of Mus musculus (Mouse).